A 120-amino-acid polypeptide reads, in one-letter code: UPF0715 membrane protein YwlA (120 aa).

4 helical membrane-spanning segments follow: residues 3–23 (YNYT…VIYI), 26–46 (FIIA…LIFA), 63–83 (LYLL…FGML), and 95–115 (AFYL…SVLL).

It belongs to the UPF0715 family.

Its subcellular location is the cell membrane. The polypeptide is UPF0715 membrane protein YwlA (ywlA) (Bacillus subtilis (strain 168)).